A 513-amino-acid polypeptide reads, in one-letter code: Alanine--glyoxylate aminotransferase 2, mitochondrial (513 aa).

The N-terminal 40 residues, 1 to 40 (MSLAWRNLQKPFYLETSLRILQMRPSLSLGASRIAVPKLT), are a transit peptide targeting the mitochondrion. Lys-56 carries the post-translational modification N6-acetyllysine. Residue Lys-70 is modified to N6-acetyllysine; alternate. An N6-succinyllysine; alternate modification is found at Lys-70. At Lys-83 the chain carries N6-acetyllysine. Lys-261 carries the post-translational modification N6-acetyllysine; alternate. Lys-261 bears the N6-succinyllysine; alternate mark. Lys-303 is modified (N6-succinyllysine). Residue Lys-349 is modified to N6-(pyridoxal phosphate)lysine. N6-acetyllysine; alternate occurs at positions 416 and 419. N6-succinyllysine; alternate is present on residues Lys-416 and Lys-419. At Lys-453 the chain carries N6-acetyllysine.

This sequence belongs to the class-III pyridoxal-phosphate-dependent aminotransferase family. As to quaternary structure, homotetramer. It depends on pyridoxal 5'-phosphate as a cofactor. In terms of tissue distribution, expressed in the liver and kidney.

It is found in the mitochondrion. It catalyses the reaction glyoxylate + L-alanine = glycine + pyruvate. The enzyme catalyses (R)-3-amino-2-methylpropanoate + pyruvate = 2-methyl-3-oxopropanoate + L-alanine. The catalysed reaction is 3-oxopropanoate + L-alanine = beta-alanine + pyruvate. It carries out the reaction 2-oxobutanoate + L-alanine = (2S)-2-aminobutanoate + pyruvate. It catalyses the reaction N(omega),N(omega)-dimethyl-L-arginine + pyruvate = 5-(3,3-dimethylguanidino)-2-oxopentanoate + L-alanine. The enzyme catalyses N(omega),N('omega)-dimethyl-L-arginine + pyruvate = 5-(3,3'-dimethylguanidino)-2-oxopentanoate + L-alanine. The catalysed reaction is N(omega),N(omega)-dimethyl-L-arginine + glyoxylate = 5-(3,3-dimethylguanidino)-2-oxopentanoate + glycine. It carries out the reaction N(omega),N('omega)-dimethyl-L-arginine + glyoxylate = 5-(3,3'-dimethylguanidino)-2-oxopentanoate + glycine. It catalyses the reaction N(omega)-methyl-L-arginine + pyruvate = 5-(3-methylguanidino)-2-oxopentanoate + L-alanine. The enzyme catalyses N(omega)-methyl-L-arginine + glyoxylate = 5-(3-methylguanidino)-2-oxopentanoate + glycine. The catalysed reaction is L-ornithine + pyruvate = 5-amino-2-oxopentanoate + L-alanine. It carries out the reaction L-ornithine + glyoxylate = 5-amino-2-oxopentanoate + glycine. It catalyses the reaction (2S)-2-aminobutanoate + glyoxylate = 2-oxobutanoate + glycine. The enzyme catalyses N(omega),N(omega)-dimethyl-L-arginine + oxaloacetate = 5-(3,3-dimethylguanidino)-2-oxopentanoate + L-aspartate. The catalysed reaction is oxaloacetate + L-alanine = L-aspartate + pyruvate. It carries out the reaction N(omega),N(omega)-dimethyl-L-arginine + 2-oxobutanoate = 5-(3,3-dimethylguanidino)-2-oxopentanoate + (2S)-2-aminobutanoate. It catalyses the reaction 2-oxopentanoate + N(omega),N(omega)-dimethyl-L-arginine = 5-(3,3-dimethylguanidino)-2-oxopentanoate + L-2-aminopentanoate. The enzyme catalyses 2-oxohexanoate + N(omega),N(omega)-dimethyl-L-arginine = L-2-aminohexanoate + 5-(3,3-dimethylguanidino)-2-oxopentanoate. Its activity is regulated as follows. (R)-3-amino-2-methylpropionate--pyruvate transaminase and beta-alanine-pyruvate aminotransferase are inhibited by aminooxyacetic acid. Its function is as follows. Multifunctional aminotransferase with a broad substrate specificity. Catalyzes the conversion of glyoxylate to glycine using alanine as the amino donor. Catalyzes metabolism of not L- but the D-isomer of D-beta-aminoisobutyric acid to generate 2-methyl-3-oxopropanoate and alanine. Catalyzes the transfer of the amino group from beta-alanine to pyruvate to yield L-alanine and 3-oxopropanoate. Can metabolize NG-monomethyl-L-arginine (NMMA), asymmetric NG,NG-dimethyl-L-arginine (ADMA) and symmetric NG,N'G-dimethyl-L-arginine (SDMA). ADMA is a potent inhibitor of nitric-oxide (NO) synthase, and this activity provides mechanism through which the kidney regulates blood pressure. The chain is Alanine--glyoxylate aminotransferase 2, mitochondrial (Agxt2) from Mus musculus (Mouse).